A 306-amino-acid polypeptide reads, in one-letter code: Aspartate carbamoyltransferase catalytic subunit (306 aa).

Residues arginine 55 and threonine 56 each contribute to the carbamoyl phosphate site. Position 85 (lysine 85) interacts with L-aspartate. Residues arginine 106, histidine 133, and glutamine 136 each contribute to the carbamoyl phosphate site. L-aspartate contacts are provided by arginine 166 and arginine 228. Carbamoyl phosphate-binding residues include leucine 264 and proline 265.

Belongs to the aspartate/ornithine carbamoyltransferase superfamily. ATCase family. As to quaternary structure, heterododecamer (2C3:3R2) of six catalytic PyrB chains organized as two trimers (C3), and six regulatory PyrI chains organized as three dimers (R2).

It carries out the reaction carbamoyl phosphate + L-aspartate = N-carbamoyl-L-aspartate + phosphate + H(+). The protein operates within pyrimidine metabolism; UMP biosynthesis via de novo pathway; (S)-dihydroorotate from bicarbonate: step 2/3. Functionally, catalyzes the condensation of carbamoyl phosphate and aspartate to form carbamoyl aspartate and inorganic phosphate, the committed step in the de novo pyrimidine nucleotide biosynthesis pathway. The sequence is that of Aspartate carbamoyltransferase catalytic subunit from Serratia marcescens.